A 1783-amino-acid chain; its full sequence is uncharacterized protein (1783 aa).

A helical transmembrane segment spans residues 16–36 (FFLLFGIIFVLFSIIFLETSI). The span at 105–119 (GSDSGQSNGSGDNQN) shows a compositional bias: low complexity. The segment at 105–125 (GSDSGQSNGSGDNQNKTIPRK) is disordered. Transmembrane regions (helical) follow at residues 917 to 937 (VSTV…ILLI), 967 to 987 (VFAG…AFLL), 1010 to 1030 (WLSF…ISWI), 1084 to 1104 (LFTY…AGTI), 1660 to 1680 (FLLG…GISM), 1709 to 1729 (FIPA…GVLI), 1730 to 1750 (GIQA…FEFL), and 1752 to 1772 (YMVG…YFWI).

It belongs to the ABC-4 integral membrane protein family.

The protein resides in the cell membrane. This is an uncharacterized protein from Mycoplasma genitalium (strain ATCC 33530 / DSM 19775 / NCTC 10195 / G37) (Mycoplasmoides genitalium).